Here is a 938-residue protein sequence, read N- to C-terminus: Isoleucine--tRNA ligase (938 aa).

Residues 58–68 carry the 'HIGH' region motif; the sequence is PYANGNIHIGH. Glu562 lines the L-isoleucyl-5'-AMP pocket. The short motif at 603 to 607 is the 'KMSKS' region element; the sequence is KMSKS. Position 606 (Lys606) interacts with ATP. Residues Cys901, Cys904, Cys921, and Cys924 each contribute to the Zn(2+) site.

This sequence belongs to the class-I aminoacyl-tRNA synthetase family. IleS type 1 subfamily. In terms of assembly, monomer. It depends on Zn(2+) as a cofactor.

The protein resides in the cytoplasm. The enzyme catalyses tRNA(Ile) + L-isoleucine + ATP = L-isoleucyl-tRNA(Ile) + AMP + diphosphate. Its function is as follows. Catalyzes the attachment of isoleucine to tRNA(Ile). As IleRS can inadvertently accommodate and process structurally similar amino acids such as valine, to avoid such errors it has two additional distinct tRNA(Ile)-dependent editing activities. One activity is designated as 'pretransfer' editing and involves the hydrolysis of activated Val-AMP. The other activity is designated 'posttransfer' editing and involves deacylation of mischarged Val-tRNA(Ile). This chain is Isoleucine--tRNA ligase, found in Actinobacillus pleuropneumoniae serotype 5b (strain L20).